Consider the following 65-residue polypeptide: Large ribosomal subunit protein bL28 (65 aa).

The disordered stretch occupies residues 1-26 (MARRDDLTNKGPMSGNKRSHALNATK). Basic residues predominate over residues 17 to 26 (KRSHALNATK).

Belongs to the bacterial ribosomal protein bL28 family.

In Mycoplasma mobile (strain ATCC 43663 / 163K / NCTC 11711) (Mesomycoplasma mobile), this protein is Large ribosomal subunit protein bL28.